The chain runs to 517 residues: Ribonuclease Y (517 aa).

Residues 4–24 (LIYIVILFVGIAAGAFFGISV) traverse the membrane as a helical segment. Residues 207–267 (TISTVALPND…LRREVARRTI (61 aa)) enclose the KH domain. The HD domain occupies 333–426 (VLAHSVEVAQ…VAAADAISAA (94 aa)).

The protein belongs to the RNase Y family.

It localises to the cell membrane. Endoribonuclease that initiates mRNA decay. The chain is Ribonuclease Y from Fervidobacterium nodosum (strain ATCC 35602 / DSM 5306 / Rt17-B1).